A 2715-amino-acid chain; its full sequence is Chromodomain-helicase-DNA-binding protein 6 (2715 aa).

The span at 1 to 11 (MKMKIQKKEKQ) shows a compositional bias: basic and acidic residues. Disordered stretches follow at residues 1-30 (MKMKIQKKEKQLSNLKVLNHSPMSDASVNF) and 66-244 (EEAA…QVKR). The required for DNA-dependent ATPase activity stretch occupies residues 1 to 747 (MKMKIQKKEK…MMELRKCCNH (747 aa)). Positions 12-27 (LSNLKVLNHSPMSDAS) are enriched in polar residues. A compositionally biased stretch (basic and acidic residues) spans 123-172 (EPKEPKEPRKAKEPKKAKEHKEPKQKDGAKKARKPREASGTKEAKEKRSC). 2 Chromo domains span residues 292 to 343 (NIIE…KDPR) and 375 to 439 (VEVD…KHVE). The Helicase ATP-binding domain maps to 473 to 647 (LFNWYNRKNC…FSLLNFLEPS (175 aa)). 486–493 (DEMGLGKT) lines the ATP pocket. A DEAH box motif is present at residues 598–601 (DEAH). Positions 787-956 (LIDKLLPKLI…LSKMEVEDLL (170 aa)) constitute a Helicase C-terminal domain. Residues 1318 to 1390 (KSLSAEQGVT…SDPDKSPWPV (73 aa)) are disordered. Polar residues predominate over residues 1321–1330 (SAEQGVTDGT). 2 stretches are compositionally biased toward basic and acidic residues: residues 1333 to 1351 (IPERGNTDKEDNAEDKVDG) and 1367 to 1376 (FSEKKDDSRA). The Myb-like domain maps to 1449 to 1503 (RWTRREQADFYRTVSSFGVVYDQEKKTFDWTQFRIISRLDKKSDESLEQYFYSFV). Over residues 2027–2038 (FENKDDYDRDGN) the composition is skewed to basic and acidic residues. Disordered regions lie at residues 2027–2063 (FENKDDYDRDGNCHSQDYPGKYSEEESKSSTSGITGD), 2116–2148 (SQQYEPSGTLPTPVLTSSAGSRTSLSEPEAAEH), 2321–2351 (QATLSTTHPEGPGPATSAPEPATAASSQAEK), 2373–2422 (PGFG…FLPE), 2547–2602 (TSTA…PAIT), and 2648–2715 (VGLE…NDTN). Residues 2116–2141 (SQQYEPSGTLPTPVLTSSAGSRTSLS) are compositionally biased toward polar residues. Residues 2329–2346 (PEGPGPATSAPEPATAAS) show a composition bias toward low complexity. Over residues 2547-2560 (TSTAPASLSSTTKS) the composition is skewed to low complexity. Composition is skewed to basic and acidic residues over residues 2567–2588 (KTAEDKPSSHDVKTDTLAEDKP) and 2706–2715 (ALKDSNNDTN).

This sequence belongs to the SNF2/RAD54 helicase family. Interacts with NFE2L2; involved in activation of the transcription. As to quaternary structure, (Microbial infection) Interacts with the influenza A polymerase complex composed fo PB1, PB2 and PA. In terms of assembly, (Microbial infection) Interacts (via N-terminus) with human papillomavirus protein E8^E2C (via C-terminus); this interaction induces transcriptional repression of the viral genome. Widely expressed.

The protein localises to the nucleus. Its subcellular location is the nucleoplasm. The catalysed reaction is ATP + H2O = ADP + phosphate + H(+). Functionally, ATP-dependent chromatin-remodeling factor. Regulates transcription by disrupting nucleosomes in a largely non-sliding manner which strongly increases the accessibility of chromatin; nucleosome disruption requires ATP. Activates transcription of specific genes in response to oxidative stress through interaction with NFE2L2. In terms of biological role, (Microbial infection) Acts as a transcriptional repressor of different viruses including influenza virus or papillomavirus. During influenza virus infection, the viral polymerase complex localizes CHD6 to inactive chromatin where it gets degraded in a proteasome independent-manner. The protein is Chromodomain-helicase-DNA-binding protein 6 (CHD6) of Homo sapiens (Human).